A 228-amino-acid chain; its full sequence is Protein GrpE (228 aa).

Disordered regions lie at residues 1-31 (MADE…NRAA) and 209-228 (GVSK…EGNG).

Belongs to the GrpE family. Homodimer.

It is found in the cytoplasm. In terms of biological role, participates actively in the response to hyperosmotic and heat shock by preventing the aggregation of stress-denatured proteins, in association with DnaK and GrpE. It is the nucleotide exchange factor for DnaK and may function as a thermosensor. Unfolded proteins bind initially to DnaJ; upon interaction with the DnaJ-bound protein, DnaK hydrolyzes its bound ATP, resulting in the formation of a stable complex. GrpE releases ADP from DnaK; ATP binding to DnaK triggers the release of the substrate protein, thus completing the reaction cycle. Several rounds of ATP-dependent interactions between DnaJ, DnaK and GrpE are required for fully efficient folding. This chain is Protein GrpE, found in Brucella anthropi (strain ATCC 49188 / DSM 6882 / CCUG 24695 / JCM 21032 / LMG 3331 / NBRC 15819 / NCTC 12168 / Alc 37) (Ochrobactrum anthropi).